A 127-amino-acid polypeptide reads, in one-letter code: Large ribosomal subunit protein bL20c (127 aa).

Belongs to the bacterial ribosomal protein bL20 family.

The protein localises to the plastid. It localises to the chloroplast. In terms of biological role, binds directly to 23S ribosomal RNA and is necessary for the in vitro assembly process of the 50S ribosomal subunit. It is not involved in the protein synthesizing functions of that subunit. In Jasminum nudiflorum (Winter jasmine), this protein is Large ribosomal subunit protein bL20c.